The following is a 263-amino-acid chain: Nicotinamide riboside transporter PnuC (263 aa).

Residues 1–40 lie on the Cytoplasmic side of the membrane; that stretch reads MQYGMDSFGLRGIPHQVFIKKKEGKIMSLAWWKRELFGGW. The chain crosses the membrane as a helical span at residues 41 to 61; that stretch reads THFEAVWLLMFLGIQAVVFVF. Residue N62 is a topological domain, periplasmic. A helical transmembrane segment spans residues 63–83; sequence PDSWLASVAAVTGILCVVFVG. Topologically, residues 84-86 are cytoplasmic; sequence KGK. Residues 87 to 107 traverse the membrane as a helical segment; sequence ISNYLFGLISVSLYAYVSYTF. The Periplasmic portion of the chain corresponds to 108–109; the sequence is KL. Residues 110–131 form a helical membrane-spanning segment; the sequence is YGEMMLNLLVYVPVQFVGFAMW. Position 124 (Q124) interacts with beta-nicotinamide D-riboside. Residues 132–155 lie on the Cytoplasmic side of the membrane; that stretch reads RKHMALGETAETEEVKAKALTVRQ. Residues 156-177 traverse the membrane as a helical segment; that stretch reads WLLVVAASVVGTSVYIEWLHHL. Residues 178–180 lie on the Periplasmic side of the membrane; that stretch reads GSA. A helical transmembrane segment spans residues 181–201; sequence LPTLDGVTVVVSIVAQVLMIL. Residue Q196 coordinates beta-nicotinamide D-riboside. Residues 202–205 lie on the Cytoplasmic side of the membrane; that stretch reads RYRE. Residues 206 to 226 form a helical membrane-spanning segment; that stretch reads QWALWIVVNILTISLWAVAWF. Beta-nicotinamide D-riboside is bound by residues W210 and N214. Over 227-232 the chain is Periplasmic; that stretch reads KNGETS. The chain crosses the membrane as a helical span at residues 233 to 253; it reads LPLLLMYVMYLCNSVYGYINW. A beta-nicotinamide D-riboside-binding site is contributed by Y242. The Cytoplasmic segment spans residues 254–263; sequence TKLVKRHSGQ.

It belongs to the nicotinamide ribonucleoside (NR) uptake permease (TC 4.B.1) family. Homotrimer.

Its subcellular location is the cell inner membrane. Required for nicotinamide riboside transport across the inner membrane. This is Nicotinamide riboside transporter PnuC from Neisseria mucosa (strain ATCC 25996 / DSM 4631 / NCTC 10774 / M26).